Reading from the N-terminus, the 626-residue chain is Grainyhead-like protein 3 homolog (626 aa).

The tract at residues 30–95 (EAWKTYLENP…QGKRYYHGME (66 aa)) is transcription activation. The Grh/CP2 DB domain maps to 226–460 (SLKSDFEYTL…DLETPPVLFI (235 aa)).

It belongs to the grh/CP2 family. Grainyhead subfamily. As to quaternary structure, homodimer, also forms heterodimers with GRHL1 and GRHL2. Interacts with LMO4. In terms of tissue distribution, expressed in brain, colon, pancreas, placenta and kidney. Isoform 1 is expressed in lung and tonsil. Isoform 2 is prostate-specific.

The protein resides in the nucleus. Functionally, transcription factor playing important roles in primary neurulation and in the differentiation of stratified epithelia of both ectodermal and endodermal origin. Binds directly to the consensus DNA sequence 5'-AACCGGTT-3' acting as an activator and repressor on distinct target genes. xhibits functional redundancy with GRHL2 in epidermal morphogenetic events and epidermal wound repair. Exhibits functional redundancy with GRHL2 in epidermal morphogenetic events and epidermal wound repair but is essential to form the epidermal barrier with TGM3 as critical direct target gene among others. Despite being dispensable during normal epidermal homeostasis in the adulthood, is again required for barrier repair after immune-mediated epidermal damage, regulates distinct gene batteries in embryonic epidermal differentiation and adult epidermal barrier reformation after injury. Plays unique and cooperative roles with GRHL2 in establishing distinct zones of primary neurulation. Essential for spinal closure, functions cooperatively with GRHL2 in closure 2 (forebrain/midbrain boundary) and posterior neuropore closure. Also required for proper development of the oral periderm. No genetic interaction with GRHL3, no functional cooperativity due to diverse target gene selectivity. The protein is Grainyhead-like protein 3 homolog of Homo sapiens (Human).